A 451-amino-acid chain; its full sequence is 2-succinylbenzoate--CoA ligase (451 aa).

The protein belongs to the ATP-dependent AMP-binding enzyme family. MenE subfamily.

The catalysed reaction is 2-succinylbenzoate + ATP + CoA = 2-succinylbenzoyl-CoA + AMP + diphosphate. It participates in quinol/quinone metabolism; 1,4-dihydroxy-2-naphthoate biosynthesis; 1,4-dihydroxy-2-naphthoate from chorismate: step 5/7. Its pathway is quinol/quinone metabolism; menaquinone biosynthesis. In terms of biological role, converts 2-succinylbenzoate (OSB) to 2-succinylbenzoyl-CoA (OSB-CoA). This is 2-succinylbenzoate--CoA ligase from Lactococcus lactis subsp. lactis (strain IL1403) (Streptococcus lactis).